We begin with the raw amino-acid sequence, 500 residues long: Lysine--tRNA ligase (500 aa).

Residues glutamate 410 and glutamate 417 each coordinate Mg(2+).

Belongs to the class-II aminoacyl-tRNA synthetase family. In terms of assembly, homodimer. Mg(2+) serves as cofactor.

Its subcellular location is the cytoplasm. It carries out the reaction tRNA(Lys) + L-lysine + ATP = L-lysyl-tRNA(Lys) + AMP + diphosphate. This Pseudomonas savastanoi pv. phaseolicola (strain 1448A / Race 6) (Pseudomonas syringae pv. phaseolicola (strain 1448A / Race 6)) protein is Lysine--tRNA ligase.